A 618-amino-acid chain; its full sequence is Cationic amino acid transporter 3 (618 aa).

Topologically, residues 1–36 (MLWQALRRFGQKLVRRRVLELGMGETRLARCLSTLD) are cytoplasmic. Residues 37 to 57 (LVALGVGSTLGAGVYVLAGEV) traverse the membrane as a helical segment. The Extracellular segment spans residues 58-61 (AKDK). A helical membrane pass occupies residues 62 to 82 (AGPSIVICFLVAALSSVLAGL). Residues 83-107 (CYAEFGARVPGSGSAYLYSYVTVGE) lie on the Cytoplasmic side of the membrane. A helical membrane pass occupies residues 108 to 128 (LWAFTTGWNLILSYVIGTASV). The Extracellular segment spans residues 129–162 (ARAWSSAFDNLIGNHISRTLKGTILLKMPHVLAE). The helical transmembrane segment at 163-183 (YPDFFALALVLLLTGLLVLGA) threads the bilayer. Topologically, residues 184 to 191 (SKSALVTK) are cytoplasmic. The helical transmembrane segment at 192 to 212 (VFTGMNLLVLSFVIISGFIKG) threads the bilayer. The Extracellular segment spans residues 213 to 244 (ELRNWKLTKEDYCLTMSESNGTCSLDSMGSGG). N-linked (GlcNAc...) asparagine glycosylation is present at Asn232. Residues 245–265 (FMPFGLEGILRGAATCFYAFV) form a helical membrane-spanning segment. Over 266-285 (GFDCIATTGEEAQNPQRSIP) the chain is Cytoplasmic. Residues 286–306 (MGIVISMFICFLAYFGVSSAL) traverse the membrane as a helical segment. Topologically, residues 307–335 (TLMMPYYKLHPESPLPEAFSYVGWEPARY) are extracellular. A helical membrane pass occupies residues 336 to 356 (LVAIGSLCALSTSLLGSMFPM). Residues 357–380 (PRVMYSMAEDGLLFRVLAKVHSVT) are Cytoplasmic-facing. Residues 381–401 (HIPIVATLVSGVIAAFMAFLF) traverse the membrane as a helical segment. At 402-406 (ELTDL) the chain is on the extracellular side. The helical transmembrane segment at 407 to 427 (VDLMSIGTLLAHSLVSICVLI) threads the bilayer. Topologically, residues 428 to 474 (LRYQPDQEMKSVEEEMELQEETLEAEKLTVQALFCPVNSIPTLLSGR) are cytoplasmic. Residues 475–495 (VVYVCSSLLAVLLTVLCLVLT) traverse the membrane as a helical segment. Topologically, residues 496 to 506 (WWTTPLRSGDP) are extracellular. A helical membrane pass occupies residues 507–527 (VWVTVVVLILGLILAISGVIW). At 528–539 (RQPQNRTPLHFK) the chain is on the cytoplasmic side. The helical transmembrane segment at 540–560 (VPAVPLLPLVSIFVNVYLMMQ) threads the bilayer. At 561–568 (MTAGTWAR) the chain is on the extracellular side. Residues 569–589 (FGIWMLIGFAIYFGYGIQHSM) form a helical membrane-spanning segment. The Cytoplasmic segment spans residues 590-618 (KEVKNHQTLPKTRAQTIDLDLTTSCVHSI). At Thr605 the chain carries Phosphothreonine. Ser617 carries the phosphoserine modification.

It belongs to the amino acid-polyamine-organocation (APC) superfamily. Cationic amino acid transporter (CAT) (TC 2.A.3.3) family. N-glycosylated. In terms of tissue distribution, expressed in adult brain and in a wide variety of embryonic tissues.

The protein localises to the cell membrane. The catalysed reaction is L-arginine(in) = L-arginine(out). The enzyme catalyses L-lysine(in) = L-lysine(out). It carries out the reaction L-ornithine(in) = L-ornithine(out). Functionally, uniporter that mediates the uptake of cationic L-amino acids such as L-arginine, L-lysine and L-ornithine. The transport is sodium ions- and pH-independent, moderately trans-stimulated and is mediated by passive diffusion. The sequence is that of Cationic amino acid transporter 3 from Mus musculus (Mouse).